Here is a 233-residue protein sequence, read N- to C-terminus: MFAFLLFIAFTSATNIILDLDQEVKDTNIYGVFLKNEASPEKLEEAEEKEKSSSAKPESSSNEDNEDDEDEKASSSDNSESSSSDKPDNKPEASSSDKPEASSSDKPDNKPEASSSDKPDNKPEASSSDKPDNKPEASSSDKPDNKPEASSSDKPDNKPEASSTNKPEASSTNKPEASSTNKPEASSTNKPEASSTSNSNDKSGSSSDNDNNNLDAASSPFIVFCAIIIAIIF.

The segment at 35–219 (KNEASPEKLE…DNNNLDAASS (185 aa)) is disordered. Residues 38–53 (ASPEKLEEAEEKEKSS) are compositionally biased toward basic and acidic residues. The span at 61-71 (SNEDNEDDEDE) shows a compositional bias: acidic residues. 10 consecutive repeat copies span residues 82–93 (SSSDKPDNKPEA), 102–113 (SSSDKPDNKPEA), 114–125 (SSSDKPDNKPEA), 126–137 (SSSDKPDNKPEA), 138–149 (SSSDKPDNKPEA), 150–161 (SSSDKPDNKPEA), 162–169 (SSTNKPEA), 170–177 (SSTNKPEA), 178–185 (SSTNKPEA), and 186–193 (SSTNKPEA). Residues 82-161 (SSSDKPDNKP…SDKPDNKPEA (80 aa)) are 6 X 12 AA tandem repeats of S-S-S-D-K-P-D-N-K-P-E-A. Residues 83 to 159 (SSDKPDNKPE…SSSDKPDNKP (77 aa)) are compositionally biased toward basic and acidic residues. Over residues 160–192 (EASSTNKPEASSTNKPEASSTNKPEASSTNKPE) the composition is skewed to polar residues. Residues 162-193 (SSTNKPEASSTNKPEASSTNKPEASSTNKPEA) form a 4 X 8 AA tandem repeats of S-S-T-N-K-P-E-A region. Positions 193-219 (ASSTSNSNDKSGSSSDNDNNNLDAASS) are enriched in low complexity.

In terms of processing, phosphorylated on serine residue(s). O-glycosylated; glycans consist of single N-acetylglucosamine residues. Post-translationally, O-acylated; acyl group is probably palmitate, not myristate.

It is found in the cell membrane. Plays a role in the adhesion to host cells. Involved in the adhesion to host apoptotic cells thereby facilitating their phagocytosis. This is Serine-rich 25 kDa antigen protein from Entamoeba histolytica (strain ATCC 30459 / HM-1:IMSS / ABRM).